A 226-amino-acid polypeptide reads, in one-letter code: uncharacterized protein (226 aa).

The RNase H type-1 domain occupies 71 to 207 (EPDDITVYFD…ADGLAKKILS (137 aa)).

This is an uncharacterized protein from Bacillus subtilis (strain 168).